The chain runs to 165 residues: 6,7-dimethyl-8-ribityllumazine synthase (165 aa).

5-amino-6-(D-ribitylamino)uracil is bound by residues Phe22, Ser56–Glu58, and Ala80–Ile82. Glu85–Thr86 is a binding site for (2S)-2-hydroxy-3-oxobutyl phosphate. Catalysis depends on His88, which acts as the Proton donor. Phe113 lines the 5-amino-6-(D-ribitylamino)uracil pocket. Arg127 contacts (2S)-2-hydroxy-3-oxobutyl phosphate.

It belongs to the DMRL synthase family.

It catalyses the reaction (2S)-2-hydroxy-3-oxobutyl phosphate + 5-amino-6-(D-ribitylamino)uracil = 6,7-dimethyl-8-(1-D-ribityl)lumazine + phosphate + 2 H2O + H(+). It functions in the pathway cofactor biosynthesis; riboflavin biosynthesis; riboflavin from 2-hydroxy-3-oxobutyl phosphate and 5-amino-6-(D-ribitylamino)uracil: step 1/2. Functionally, catalyzes the formation of 6,7-dimethyl-8-ribityllumazine by condensation of 5-amino-6-(D-ribitylamino)uracil with 3,4-dihydroxy-2-butanone 4-phosphate. This is the penultimate step in the biosynthesis of riboflavin. The sequence is that of 6,7-dimethyl-8-ribityllumazine synthase from Thermotoga sp. (strain RQ2).